A 499-amino-acid chain; its full sequence is Glycerol kinase (499 aa).

Residue Thr-12 coordinates ADP. Positions 12, 13, and 14 each coordinate ATP. Sn-glycerol 3-phosphate is bound at residue Thr-12. Residue Arg-16 participates in ADP binding. The sn-glycerol 3-phosphate site is built by Arg-82, Glu-83, and Tyr-134. Glycerol-binding residues include Arg-82, Glu-83, and Tyr-134. Position 230 is a phosphohistidine; by HPr (His-230). Asp-244 contacts sn-glycerol 3-phosphate. Glycerol contacts are provided by Asp-244 and Gln-245. ADP-binding residues include Thr-266 and Gly-309. Residues Thr-266, Gly-309, Gln-313, and Gly-410 each contribute to the ATP site. Residues Gly-410 and Asn-414 each coordinate ADP.

The protein belongs to the FGGY kinase family. As to quaternary structure, homotetramer and homodimer (in equilibrium). The phosphoenolpyruvate-dependent sugar phosphotransferase system (PTS), including enzyme I, and histidine-containing protein (HPr) are required for the phosphorylation, which leads to the activation of the enzyme.

It carries out the reaction glycerol + ATP = sn-glycerol 3-phosphate + ADP + H(+). It functions in the pathway polyol metabolism; glycerol degradation via glycerol kinase pathway; sn-glycerol 3-phosphate from glycerol: step 1/1. With respect to regulation, activated by phosphorylation and inhibited by fructose 1,6-bisphosphate (FBP). In terms of biological role, key enzyme in the regulation of glycerol uptake and metabolism. Catalyzes the phosphorylation of glycerol to yield sn-glycerol 3-phosphate. This Staphylococcus haemolyticus (strain JCSC1435) protein is Glycerol kinase.